Reading from the N-terminus, the 254-residue chain is MVNQKIQLICETESAVQFTALCQQKGLIHDPNSYLALVQTKVEGQVRLELRKLDEPKLGAVYVDFVTGTMAHRRKFGGGRAEAVAKAVGIKGNYLPTVIDATAGLGRDAFVLAALGCKVRLVERHPVVHLLLQDGLKRAYADAEIGTMMQANMQLLDIAHIQELNSSEEGADVVYLDPMYPHKQKSALVKKEMRIFQHLIGADLDADMLLEPALLLAQKRAVVKRPDYADFLAKKTPHFSHQTKNHRFDIYLKT.

S-adenosyl-L-methionine-binding positions include Arg107 to Asp108, Glu123 to Arg124, and Asp177.

It belongs to the methyltransferase superfamily. RsmJ family.

It localises to the cytoplasm. The catalysed reaction is guanosine(1516) in 16S rRNA + S-adenosyl-L-methionine = N(2)-methylguanosine(1516) in 16S rRNA + S-adenosyl-L-homocysteine + H(+). In terms of biological role, specifically methylates the guanosine in position 1516 of 16S rRNA. The polypeptide is Ribosomal RNA small subunit methyltransferase J (Histophilus somni (strain 2336) (Haemophilus somnus)).